A 138-amino-acid chain; its full sequence is ATP synthase epsilon chain (138 aa).

The protein belongs to the ATPase epsilon chain family. F-type ATPases have 2 components, CF(1) - the catalytic core - and CF(0) - the membrane proton channel. CF(1) has five subunits: alpha(3), beta(3), gamma(1), delta(1), epsilon(1). CF(0) has three main subunits: a, b and c.

It is found in the cell inner membrane. Produces ATP from ADP in the presence of a proton gradient across the membrane. The chain is ATP synthase epsilon chain from Cupriavidus necator (strain ATCC 17699 / DSM 428 / KCTC 22496 / NCIMB 10442 / H16 / Stanier 337) (Ralstonia eutropha).